The following is a 629-amino-acid chain: Ionotropic receptor 75a (629 aa).

Over 1-335 (MQLVQLANFV…GDVFLQPFSP (335 aa)) the chain is Extracellular. N-linked (GlcNAc...) asparagine glycans are attached at residues Asn61, Asn112, Asn126, Asn144, Asn166, and Asn232. Residues 336–356 (LVWYLFGGVLSLIGVLLWITF) form a helical membrane-spanning segment. The Cytoplasmic portion of the chain corresponds to 357 to 374 (YMECKRMQKRWRLDYLPS). Residues 375–395 (LLSTFLISFGAACIQSSSLIP) traverse the membrane as a helical segment. Topologically, residues 396-402 (RSAGGRL) are extracellular. A helical transmembrane segment spans residues 403-423 (IYFALFLISFIMYNYYTSVVV). Topologically, residues 424 to 592 (SSLLSSPVKS…NFVITVGMEY (169 aa)) are cytoplasmic. Residues 593 to 613 (VAPLLLMLICADILVVVILLV) traverse the membrane as a helical segment. Over 614-629 (ELAWKRFFTRHLTFHP) the chain is Extracellular.

This sequence belongs to the glutamate-gated ion channel (TC 1.A.10.1) family. As to expression, expressed in acetic-acid-sensing neurons in the antennal coeloconic 2 (ac2) and antennal coeloconic 3 (ac3) sensilla class of sensory hairs (at protein level).

It localises to the cell membrane. Its subcellular location is the cell projection. The protein resides in the dendrite. Functionally, odorant receptor for acetic and propionic acid. Functions as part of an olfactory receptor complex including the ionotropic receptor coreceptor Ir8a. In Drosophila melanogaster (Fruit fly), this protein is Ionotropic receptor 75a.